Reading from the N-terminus, the 879-residue chain is Probable phospholipid transport protein YdbH (879 aa).

Residues 1 to 6 are Cytoplasmic-facing; it reads MLGKYK. The helical transmembrane segment at 7-29 threads the bilayer; that stretch reads AVLALLLLIILVPLTLLMTLGLW. Over 30 to 879 the chain is Periplasmic; that stretch reads VPTLAGIWLP…PQGKECEEKQ (850 aa).

As to quaternary structure, interacts with the outer membrane lipoprotein YnbE.

It is found in the cell inner membrane. Involved in outer membrane lipid homeostasis. Interacts with the outer membrane lipoprotein YnbE to form a functional protein bridge connecting the inner and outer membranes of the cell. Likely transports phospholipids between the inner membrane and the outer membrane. It would provide a bridge-like structure that protects phospholipids as they travel across the periplasm. Its function is as follows. TamB, YdbH and YhdP are redundant, but not equivalent, in performing an essential function for growth and maintaining lipid homeostasis in the outer membrane. Any of these three proteins is sufficient for growth. This is Probable phospholipid transport protein YdbH (ydbH) from Escherichia coli (strain K12).